Here is a 516-residue protein sequence, read N- to C-terminus: Protein BTN1 (516 aa).

8 consecutive transmembrane segments (helical) span residues 24 to 44, 57 to 77, 88 to 108, 112 to 132, 146 to 166, 169 to 189, 371 to 391, and 409 to 429; these read LFAAFMIFGLLNNVLYVIILS, GVVALFNIFPALITKVVWPLL, VGFCTICSWFGIITIALSSSL, LLGISLASLSSGMGELTFLQL, LGAWSSGTGFAGVAGAGIWWL, GLGVKGGLGLSSFLPLFFPIT, PAIIQFLVLSLLFLQAKTFFF, and SITIVFLLICLEGLCGGSGYV.

The protein belongs to the battenin family.

It localises to the vacuole membrane. In terms of biological role, involved in vacuolar transport and vacuole pH homeostasis. Also required for cytokinesis. This is Protein BTN1 (BTN1) from Cryptococcus neoformans var. neoformans serotype D (strain JEC21 / ATCC MYA-565) (Filobasidiella neoformans).